The chain runs to 317 residues: Protoheme IX farnesyltransferase (317 aa).

9 helical membrane-spanning segments follow: residues 28–48 (IIPL…HGHI), 53–73 (LLIT…LNCI), 101–121 (LIFA…FVNL), 122–142 (LSAC…THWL), 150–170 (IVIG…AVTG), 178–198 (ILFA…ALMI), 223–243 (IWIY…PFQA), 246–266 (LFYA…AWEL), and 282–302 (YSIL…LPAV).

It belongs to the UbiA prenyltransferase family. Protoheme IX farnesyltransferase subfamily.

The protein resides in the cell inner membrane. The catalysed reaction is heme b + (2E,6E)-farnesyl diphosphate + H2O = Fe(II)-heme o + diphosphate. It participates in porphyrin-containing compound metabolism; heme O biosynthesis; heme O from protoheme: step 1/1. Functionally, converts heme B (protoheme IX) to heme O by substitution of the vinyl group on carbon 2 of heme B porphyrin ring with a hydroxyethyl farnesyl side group. This is Protoheme IX farnesyltransferase from Picosynechococcus sp. (strain ATCC 27264 / PCC 7002 / PR-6) (Agmenellum quadruplicatum).